A 318-amino-acid chain; its full sequence is Aspartate carbamoyltransferase catalytic subunit (318 aa).

Carbamoyl phosphate is bound by residues R55 and T56. K83 is an L-aspartate binding site. Residues R105, H138, and Q141 each contribute to the carbamoyl phosphate site. 2 residues coordinate L-aspartate: R171 and R225. 2 residues coordinate carbamoyl phosphate: G266 and P267.

Belongs to the aspartate/ornithine carbamoyltransferase superfamily. ATCase family. In terms of assembly, heterododecamer (2C3:3R2) of six catalytic PyrB chains organized as two trimers (C3), and six regulatory PyrI chains organized as three dimers (R2).

The catalysed reaction is carbamoyl phosphate + L-aspartate = N-carbamoyl-L-aspartate + phosphate + H(+). It participates in pyrimidine metabolism; UMP biosynthesis via de novo pathway; (S)-dihydroorotate from bicarbonate: step 2/3. Functionally, catalyzes the condensation of carbamoyl phosphate and aspartate to form carbamoyl aspartate and inorganic phosphate, the committed step in the de novo pyrimidine nucleotide biosynthesis pathway. This Corynebacterium kroppenstedtii (strain DSM 44385 / JCM 11950 / CIP 105744 / CCUG 35717) protein is Aspartate carbamoyltransferase catalytic subunit.